The sequence spans 211 residues: Nucleoside triphosphate pyrophosphatase (211 aa).

The active-site Proton acceptor is D76.

Belongs to the Maf family. The cofactor is a divalent metal cation.

The protein localises to the cytoplasm. It carries out the reaction a ribonucleoside 5'-triphosphate + H2O = a ribonucleoside 5'-phosphate + diphosphate + H(+). The enzyme catalyses a 2'-deoxyribonucleoside 5'-triphosphate + H2O = a 2'-deoxyribonucleoside 5'-phosphate + diphosphate + H(+). In terms of biological role, nucleoside triphosphate pyrophosphatase. May have a dual role in cell division arrest and in preventing the incorporation of modified nucleotides into cellular nucleic acids. The polypeptide is Nucleoside triphosphate pyrophosphatase (Saccharopolyspora erythraea (strain ATCC 11635 / DSM 40517 / JCM 4748 / NBRC 13426 / NCIMB 8594 / NRRL 2338)).